The sequence spans 254 residues: E3 ubiquitin-protein ligase NEURL3 (254 aa).

The NHR domain maps to 17–174 (ALSFHGNATG…TTKAIELLDP (158 aa)). The RING-type zinc-finger motif lies at 197-236 (CVICFHNTANTRLMPCGHSHFCGSCAWHIFKDTARCPICR).

As to expression, expressed in alveolar epithelial type II cells.

It is found in the cytoplasm. The enzyme catalyses S-ubiquitinyl-[E2 ubiquitin-conjugating enzyme]-L-cysteine + [acceptor protein]-L-lysine = [E2 ubiquitin-conjugating enzyme]-L-cysteine + N(6)-ubiquitinyl-[acceptor protein]-L-lysine.. Its pathway is protein modification; protein ubiquitination. E3 ubiquitin-protein ligase that plays a role in various biological processes such as lung development or innate immunity. Seems to utilize UBE2E1. Promotes innate antiviral response by catalyzing 'Lys-63'-linked ubiquitination of IRF7. Plays an essential role in TLR4-mediated activation of MAPK pathways by promoting 'Lys-48'-linked polyubiquitination of the phosphatase DUSP1/MKP1. This Mus musculus (Mouse) protein is E3 ubiquitin-protein ligase NEURL3 (Neurl3).